The chain runs to 1347 residues: Protocadherin-11 X-linked (1347 aa).

Residues 1–23 form the signal peptide; it reads MDLLSGTYIFAVLLACVVFHSGA. The Extracellular segment spans residues 24–812; that stretch reads QEKNYTIREE…VSSPTSDYVK (789 aa). Cadherin domains lie at 26 to 139, 140 to 249, 250 to 355, 362 to 466, 467 to 570, 571 to 673, and 677 to 795; these read KNYT…APLF, PATV…HPVF, KETE…VPSI, NPVN…APVF, TQSF…SPVF, THNE…KPVF, and PSNC…APVT. N27, N48, and N54 each carry an N-linked (GlcNAc...) asparagine glycan. N-linked (GlcNAc...) asparagine glycosylation occurs at N344. A glycan (N-linked (GlcNAc...) asparagine) is linked at N553. N-linked (GlcNAc...) asparagine glycosylation occurs at N773. The chain crosses the membrane as a helical span at residues 813–833; that stretch reads ILVAAVAGTITVVVVIFITAV. At 834 to 1347 the chain is on the cytoplasmic side; the sequence is VRCRQAPHLK…DSPIMEEHPL (514 aa). 3 disordered regions span residues 1057–1091, 1097–1116, and 1326–1347; these read LPEG…GYPQ, RATP…ESTF, and FTPR…EHPL.

Expressed strongly in fetal brain and brain (cortex, amygdala, thalamus, substantia nigra, hippocampus, caudate nucleus and corpus callosum). Expressed at low level in testis.

It localises to the cell membrane. In terms of biological role, potential calcium-dependent cell-adhesion protein. The sequence is that of Protocadherin-11 X-linked (PCDH11X) from Homo sapiens (Human).